We begin with the raw amino-acid sequence, 339 residues long: Protein H339R (339 aa).

It belongs to the asfivirus H339R family. As to quaternary structure, interacts with NACA (alpha chain of nascent polypeptide-associated complex).

Its subcellular location is the host cytoplasm. It is found in the host nucleus. The protein localises to the virion. This is Protein H339R from Ornithodoros (relapsing fever ticks).